Consider the following 279-residue polypeptide: MMPEYVRKKLTLDFGQVTDYIVRRIREYIEESKKEGGIIGLSGGIDSSVTTILLSRATNNFYILLMPTSSTPQKDIEDAMKIIKIVNGENKYSYINIDEIINEFSSIVNISDKIVIGNIKARVRMTLLYAFAQKMNYLVIGTGDKSEIMLGYFTKYGDGGVDVLPIGDLYKTQVRMLGNYLGVPEEIVKKPPSPALWEGQTAEGEIGLDYETIDSILYLKFEEMREPEEIAEMTKTSYDKVIKIINMVKTSQHKRLPPEIFRLSGRAINSDWRYPRQWG.

40–47 is an ATP binding site; sequence GLSGGIDS. Mg(2+) is bound at residue aspartate 46. Arginine 122 contributes to the deamido-NAD(+) binding site. Residue threonine 142 coordinates ATP. Glutamate 147 lines the Mg(2+) pocket. Residues lysine 155 and aspartate 162 each coordinate deamido-NAD(+). Positions 171 and 193 each coordinate ATP. 253 to 254 serves as a coordination point for deamido-NAD(+); the sequence is HK.

The protein belongs to the NAD synthetase family. In terms of assembly, homodimer.

It carries out the reaction deamido-NAD(+) + NH4(+) + ATP = AMP + diphosphate + NAD(+) + H(+). It functions in the pathway cofactor biosynthesis; NAD(+) biosynthesis; NAD(+) from deamido-NAD(+) (ammonia route): step 1/1. Catalyzes the ATP-dependent amidation of deamido-NAD to form NAD. Uses ammonia as a nitrogen source. The sequence is that of NH(3)-dependent NAD(+) synthetase from Sulfurisphaera tokodaii (strain DSM 16993 / JCM 10545 / NBRC 100140 / 7) (Sulfolobus tokodaii).